The following is a 757-amino-acid chain: MDVNPTLLFLKVPVQNAISTTFPYTGDPPYSHGTGTGYTMDTVNRTHQYSEKGKWTTNTETGAPQLNPIDGPLPEDNEPSGYAQTDCVLEAMAFLEESHPGIFENSCLETMEIVQQTRVDKLTQGRQTYDWTLNRNQPAATALANTIEIFRSNGLTANESGRLIDFLKDVMESMDKEDMEITTHFQRKRRVRDNMTKKMVTQRTIGKKKQRLNKKSYLIRALTLNTMTKDAERGKLKRRAIATPGMQIRGFVYFVETLARSICEKLEQSGLPVGGNEKKAKLANVVRKMMTNSQDTELSFTITGDNTKWNENQNPRMFLAMITYITRNQPEWFRNVLSIAPIMFSNKMARLGKGYMFESKSMKLRTQIPAEMLANIDLKYFNELTKKKIEKIRPLLIDGTASLSPGMMMGMFNMLSTVLGVSILNLGQKRYTKTTYWWDGLQSSDDFALIVNAPNHEGIQAGVDRFYRTCKLVGINMSKKKSYINRTGTFEFTSFFYRYGFVANFSMELPSFGVSGINESADMSIGVTVIKNNMINNDLGPATAQMALQLFIKDYRYTYRCHRGDTQIQTRRSFELKKLWEQTRSKAGLLVSDGGPNLYNIRNLHIPEVCLKWELMDEDYQGRLCNPLNPFVSHKEIESVNNAVVMPAHGPAKSMEYDAVATTHSWIPKRNRSILNTSQRGILEDEQMYQKCCNLFEKFFPSSSYRRPVGISSMVEAMVSRARIDARIDFESGRIKKEEFAEIMKICSTIEELRRQK.

Residues 52-82 (KGKWTTNTETGAPQLNPIDGPLPEDNEPSGY) form a disordered region. The segment covering 55–64 (WTTNTETGAP) has biased composition (polar residues). 2 consecutive short sequence motifs (nuclear localization signal) follow at residues 187–195 (RKRRVRDNM) and 203–216 (RTIG…NKKS). The tract at residues 249–256 (RGFVYFVE) is promoter-binding site. The 198-residue stretch at 286–483 (VRKMMTNSQD…GINMSKKKSY (198 aa)) folds into the RdRp catalytic domain.

It belongs to the influenza viruses polymerase PB1 family. Influenza RNA polymerase is composed of three subunits: PB1, PB2 and PA. Interacts (via N-terminus) with PA (via C-terminus). Interacts (via C-terminus) with PB2 (via N-terminus); this interaction is essential for transcription initiation. Phosphorylated by host PRKCA.

The protein localises to the host nucleus. Its subcellular location is the host cytoplasm. The catalysed reaction is RNA(n) + a ribonucleoside 5'-triphosphate = RNA(n+1) + diphosphate. Functionally, RNA-dependent RNA polymerase which is responsible for replication and transcription of virus RNA segments. The transcription of viral mRNAs occurs by a unique mechanism called cap-snatching. 5' methylated caps of cellular mRNAs are cleaved after 10-13 nucleotides by PA. In turn, these short capped RNAs are used as primers by PB1 for transcription of viral mRNAs. During virus replication, PB1 initiates RNA synthesis and copy vRNA into complementary RNA (cRNA) which in turn serves as a template for the production of more vRNAs. In Aves (Cat), this protein is RNA-directed RNA polymerase catalytic subunit.